The sequence spans 384 residues: Probable inactive linolenate hydroperoxide lyase (384 aa).

Cysteine 346 provides a ligand contact to heme.

The protein belongs to the cytochrome P450 family. Heme is required as a cofactor. Expressed in roots, leaves, flowers and siliques.

The chain is Probable inactive linolenate hydroperoxide lyase from Arabidopsis thaliana (Mouse-ear cress).